A 117-amino-acid polypeptide reads, in one-letter code: Anti-adapter protein IraM (117 aa).

This sequence belongs to the IraM/RssC family.

The protein localises to the cytoplasm. Functionally, involved in the stabilization of the sigma stress factor RpoS. This is Anti-adapter protein IraM from Klebsiella pneumoniae (strain 342).